The primary structure comprises 93 residues: Toxin RelE1 (93 aa).

The protein belongs to the RelE toxin family.

Functionally, toxic component of a type II toxin-antitoxin (TA) system. Its toxic effect is neutralized by coexpression with cognate antitoxin RelB1 but no other ParD or RelB antitoxin. The polypeptide is Toxin RelE1 (relE1) (Caulobacter vibrioides (strain ATCC 19089 / CIP 103742 / CB 15) (Caulobacter crescentus)).